We begin with the raw amino-acid sequence, 191 residues long: MAP6 domain-containing protein 1 (191 aa).

3 S-palmitoyl cysteine lipidation sites follow: Cys-5, Cys-10, and Cys-11. The tract at residues 31–106 (HGYSDPGSEE…RGQSSAPPTR (76 aa)) is disordered. Phosphoserine is present on residues Ser-38 and Ser-41. Mn stretches follow at residues 123 to 136 (TTSY…WTGV) and 158 to 170 (DPSP…VPEV). Ser-160 bears the Phosphoserine mark.

This sequence belongs to the STOP family. In terms of assembly, interacts with calmodulin. In terms of processing, palmitoylated. Palmitoylation enhances association with microtubules. Expressed in brain. Found in neurons in primary cultures, but absent in glial cells.

The protein localises to the golgi apparatus. It is found in the cytoplasm. Its subcellular location is the cytoskeleton. Its function is as follows. May have microtubule-stabilizing activity. In Mus musculus (Mouse), this protein is MAP6 domain-containing protein 1 (Map6d1).